A 334-amino-acid chain; its full sequence is Ornithine carbamoyltransferase subunit I (334 aa).

Carbamoyl phosphate-binding positions include S56 to T59, Q83, R107, and H134 to Q137. Residues N168, D232, and S236 to M237 contribute to the L-ornithine site. C274 contacts Zn(2+). Carbamoyl phosphate is bound by residues C274–L275 and R320.

The protein belongs to the aspartate/ornithine carbamoyltransferase superfamily. OTCase family. In E.coli strain K12, trimer of identical or non-identical chains are composed of ArgI (I) and/or ArgF (F). The trimer has the following composition: FFI, FFF, FII, III. E.coli strains B and W, which are known to contain only ArgI, produce only a trimer of identical chains (III).

The protein localises to the cytoplasm. It carries out the reaction carbamoyl phosphate + L-ornithine = L-citrulline + phosphate + H(+). It participates in amino-acid biosynthesis; L-arginine biosynthesis; L-arginine from L-ornithine and carbamoyl phosphate: step 1/3. Reversely inhibited by N-(N-Sulfodiaminophosphinyl)-L-ornithine. Zinc is an allosteric regulator of the substrate-bound enzyme and a competitive inhibitor of the free enzyme. Reversibly catalyzes the transfer of the carbamoyl group from carbamoyl phosphate (CP) to the N(epsilon) atom of ornithine (ORN) to produce L-citrulline, which is a substrate for argininosuccinate synthetase, the enzyme involved in the final step in arginine biosynthesis. The protein is Ornithine carbamoyltransferase subunit I of Escherichia coli (strain K12).